Consider the following 224-residue polypeptide: 7-cyano-7-deazaguanine synthase (224 aa).

ATP is bound at residue 10 to 20 (LSGGLDSATVV). 4 residues coordinate Zn(2+): cysteine 189, cysteine 199, cysteine 202, and cysteine 205.

This sequence belongs to the QueC family. Zn(2+) serves as cofactor.

The enzyme catalyses 7-carboxy-7-deazaguanine + NH4(+) + ATP = 7-cyano-7-deazaguanine + ADP + phosphate + H2O + H(+). It functions in the pathway purine metabolism; 7-cyano-7-deazaguanine biosynthesis. In terms of biological role, catalyzes the ATP-dependent conversion of 7-carboxy-7-deazaguanine (CDG) to 7-cyano-7-deazaguanine (preQ(0)). This Pseudomonas putida (strain ATCC 700007 / DSM 6899 / JCM 31910 / BCRC 17059 / LMG 24140 / F1) protein is 7-cyano-7-deazaguanine synthase.